Reading from the N-terminus, the 388-residue chain is bZIP transcription factor ABI5 homolog (388 aa).

Positions 1–36 (MASEMSKNVKVTDDQEVTSQERDQSGGTKVGGEEEI) are disordered. Phosphoserine is present on Ser-44. A bZIP domain is found at 302 to 365 (VERRQRRMIK…KQMLVEKMME (64 aa)). Residues 304–323 (RRQRRMIKNRESAARSRARK) form a basic motif region. The segment at 330–344 (LEAELNYLKQENARL) is leucine-zipper. The interval 368–388 (KEKMNANRGGSQLRRSGSCMW) is disordered.

The protein belongs to the bZIP family. ABI5 subfamily. As to quaternary structure, forms homodimers. Interacts with VP1. Interacts with GF14D. Interacts with PP2C51. Interacts with SAPK2. Post-translationally, phosphorylated at Ser-44 by SAPK6. In terms of tissue distribution, expressed in roots, leaves and panicles. Expressed in seeds.

Its subcellular location is the nucleus. In terms of biological role, transcription factor that possesses transactivation activity in yeast. Involved in abscisic acid (ABA) signaling pathway. Binds to the G-box motif 5'-CACGTG-3' of TRAB1 gene promoter. Involved in the regulation of pollen maturation. May act as negative regulator of salt stress response. Together with PYL5, PP2C30 and SAPK2, is part of an ABA signaling unit that modulates seed germination and early seedling growth. This is bZIP transcription factor ABI5 homolog from Oryza sativa subsp. japonica (Rice).